A 120-amino-acid chain; its full sequence is Large ribosomal subunit protein uL22 (120 aa).

Belongs to the universal ribosomal protein uL22 family. Part of the 50S ribosomal subunit.

Its function is as follows. This protein binds specifically to 23S rRNA; its binding is stimulated by other ribosomal proteins, e.g. L4, L17, and L20. It is important during the early stages of 50S assembly. It makes multiple contacts with different domains of the 23S rRNA in the assembled 50S subunit and ribosome. In terms of biological role, the globular domain of the protein is located near the polypeptide exit tunnel on the outside of the subunit, while an extended beta-hairpin is found that lines the wall of the exit tunnel in the center of the 70S ribosome. The chain is Large ribosomal subunit protein uL22 from Corynebacterium diphtheriae (strain ATCC 700971 / NCTC 13129 / Biotype gravis).